We begin with the raw amino-acid sequence, 45 residues long: Cytochrome b559 subunit beta (45 aa).

The helical transmembrane segment at Trp20–Ala36 threads the bilayer. His24 is a binding site for heme.

It belongs to the PsbE/PsbF family. Heterodimer of an alpha subunit and a beta subunit. PSII is composed of 1 copy each of membrane proteins PsbA, PsbB, PsbC, PsbD, PsbE, PsbF, PsbH, PsbI, PsbJ, PsbK, PsbL, PsbM, PsbT, PsbX, PsbY, PsbZ, Psb30/Ycf12, peripheral proteins PsbO, CyanoQ (PsbQ), PsbU, PsbV and a large number of cofactors. It forms dimeric complexes. It depends on heme b as a cofactor.

Its subcellular location is the cellular thylakoid membrane. Its function is as follows. This b-type cytochrome is tightly associated with the reaction center of photosystem II (PSII). PSII is a light-driven water:plastoquinone oxidoreductase that uses light energy to abstract electrons from H(2)O, generating O(2) and a proton gradient subsequently used for ATP formation. It consists of a core antenna complex that captures photons, and an electron transfer chain that converts photonic excitation into a charge separation. The sequence is that of Cytochrome b559 subunit beta from Nostoc sp. (strain PCC 7120 / SAG 25.82 / UTEX 2576).